The following is a 255-amino-acid chain: Small ribosomal subunit protein uS2 (255 aa).

Residues 230 to 255 (QGSSGRDLGASSEVPVEPALEEAAEG) form a disordered region.

Belongs to the universal ribosomal protein uS2 family.

This is Small ribosomal subunit protein uS2 from Rhizobium johnstonii (strain DSM 114642 / LMG 32736 / 3841) (Rhizobium leguminosarum bv. viciae).